A 593-amino-acid polypeptide reads, in one-letter code: Inactive metallocarboxypeptidase ECM14 (593 aa).

The first 22 residues, 1–22 (MHVTVQLSLLLSLASSLPLVSA), serve as a signal peptide directing secretion. A propeptide spanning residues 23-175 (IPQHDGQAYT…QAIYESYPKN (153 aa)) is cleaved from the precursor. Disordered regions lie at residues 75–98 (VPQR…KAPA) and 172–202 (YPKN…SQPH). A compositionally biased stretch (basic and acidic residues) spans 78–88 (RGKDSETKTGK). Over residues 188–199 (RRFSPSASTPES) the composition is skewed to polar residues. The Peptidase M14 domain occupies 211 to 537 (DYQPLSVLLP…HAVVAMGKFL (327 aa)). Zn(2+)-binding residues include His276 and Glu279. Substrate-binding positions include 276 to 279 (HARE), Arg334, and 351 to 352 (DR). A disulfide bridge connects residues Cys345 and Cys368. Asn361 carries N-linked (GlcNAc...) asparagine glycosylation. A Zn(2+)-binding site is contributed by His408. A substrate-binding site is contributed by 409 to 410 (SY). Positions 548–593 (DEPHAGEQTQDNSYDEDGDNLFRAQGGDPQVRFTRRNIGAHDDDSE) are disordered.

The protein belongs to the peptidase M14 family. Zn(2+) serves as cofactor.

The protein localises to the vacuole. It is found in the secreted. Functionally, inactive carboxypeptidase that may play a role in cell wall organization and biogenesis. The sequence is that of Inactive metallocarboxypeptidase ECM14 (ECM14) from Arthroderma otae (strain ATCC MYA-4605 / CBS 113480) (Microsporum canis).